A 382-amino-acid polypeptide reads, in one-letter code: Required for respiratory growth protein 1, mitochondrial (382 aa).

The protein belongs to the RRG1 family.

The protein resides in the mitochondrion. Functionally, essential for respiratory growth and required for mitochondrial protein synthesis. Required for vacuolar acidification. The sequence is that of Required for respiratory growth protein 1, mitochondrial (RRG1) from Vanderwaltozyma polyspora (strain ATCC 22028 / DSM 70294 / BCRC 21397 / CBS 2163 / NBRC 10782 / NRRL Y-8283 / UCD 57-17) (Kluyveromyces polysporus).